The chain runs to 301 residues: D-alanine--D-alanine ligase A (301 aa).

An ATP-grasp domain is found at 99 to 293 (KRILAFGNVR…FEELLDTIIE (195 aa)). 126–181 (IENLGYPVFVKPNNGGSSVATTLVESKEAVKDAVLEALKYDTEVMIEEYIKGDEIT) is an ATP binding site. Aspartate 248, glutamate 260, and asparagine 262 together coordinate Mg(2+).

It belongs to the D-alanine--D-alanine ligase family. It depends on Mg(2+) as a cofactor. The cofactor is Mn(2+).

The protein resides in the cytoplasm. The catalysed reaction is 2 D-alanine + ATP = D-alanyl-D-alanine + ADP + phosphate + H(+). The protein operates within cell wall biogenesis; peptidoglycan biosynthesis. Cell wall formation. In Clostridium perfringens (strain 13 / Type A), this protein is D-alanine--D-alanine ligase A.